Reading from the N-terminus, the 241-residue chain is MPFLCVNVDHVATIRQARLGIEPDPVTAAAMCELAGAVGIIMHLREDRRHVQDRDIELISKTIQTEFHFEMAATEEMQQIALRIDPATVCLVPEKREELTTEGGLNCIGQEKRLTEYLAPLHEKGIGSSLFIDADADQIKAAKAIGAEYVEIHTGHFADAPTRSEQKAELTRIIDGIKMSQDLGLKVNLGHGLNYVNILDFADVPGICEYSIGHSIMSRAIYVGIDRAVRDMVEIIRNFAD.

Asparagine 7 contacts 3-amino-2-oxopropyl phosphate. Residue 9–10 participates in 1-deoxy-D-xylulose 5-phosphate binding; the sequence is DH. Arginine 18 is a 3-amino-2-oxopropyl phosphate binding site. Catalysis depends on histidine 43, which acts as the Proton acceptor. 1-deoxy-D-xylulose 5-phosphate is bound by residues arginine 45 and histidine 50. Glutamate 70 functions as the Proton acceptor in the catalytic mechanism. Position 100 (threonine 100) interacts with 1-deoxy-D-xylulose 5-phosphate. The active-site Proton donor is histidine 191. Residues glycine 192 and 213–214 each bind 3-amino-2-oxopropyl phosphate; that span reads GH.

Belongs to the PNP synthase family. In terms of assembly, homooctamer; tetramer of dimers.

The protein resides in the cytoplasm. It carries out the reaction 3-amino-2-oxopropyl phosphate + 1-deoxy-D-xylulose 5-phosphate = pyridoxine 5'-phosphate + phosphate + 2 H2O + H(+). It functions in the pathway cofactor biosynthesis; pyridoxine 5'-phosphate biosynthesis; pyridoxine 5'-phosphate from D-erythrose 4-phosphate: step 5/5. Its function is as follows. Catalyzes the complicated ring closure reaction between the two acyclic compounds 1-deoxy-D-xylulose-5-phosphate (DXP) and 3-amino-2-oxopropyl phosphate (1-amino-acetone-3-phosphate or AAP) to form pyridoxine 5'-phosphate (PNP) and inorganic phosphate. The chain is Pyridoxine 5'-phosphate synthase from Maridesulfovibrio salexigens (strain ATCC 14822 / DSM 2638 / NCIMB 8403 / VKM B-1763) (Desulfovibrio salexigens).